Here is a 348-residue protein sequence, read N- to C-terminus: RNA 3'-terminal phosphate cyclase (348 aa).

ATP contacts are provided by residues Gln-101 and 286–289; that span reads HMAD. Catalysis depends on His-312, which acts as the Tele-AMP-histidine intermediate.

The protein belongs to the RNA 3'-terminal cyclase family. Type 1 subfamily.

The protein resides in the cytoplasm. It carries out the reaction a 3'-end 3'-phospho-ribonucleotide-RNA + ATP = a 3'-end 2',3'-cyclophospho-ribonucleotide-RNA + AMP + diphosphate. Catalyzes the conversion of 3'-phosphate to a 2',3'-cyclic phosphodiester at the end of RNA. The mechanism of action of the enzyme occurs in 3 steps: (A) adenylation of the enzyme by ATP; (B) transfer of adenylate to an RNA-N3'P to produce RNA-N3'PP5'A; (C) and attack of the adjacent 2'-hydroxyl on the 3'-phosphorus in the diester linkage to produce the cyclic end product. The biological role of this enzyme is unknown but it is likely to function in some aspects of cellular RNA processing. In Pyrobaculum aerophilum (strain ATCC 51768 / DSM 7523 / JCM 9630 / CIP 104966 / NBRC 100827 / IM2), this protein is RNA 3'-terminal phosphate cyclase.